The following is a 310-amino-acid chain: MKIIYMGTPEFAVPCLEMLIDSGHEIVGVFTQPDKPSGRGQKMNRTPVKEKALAHNIPVFQPHTLRDTNVMNEIENLKPDLIVVVAYGQILPKAILELPKHGCINVHASLLPKYRGAGPINWVIINGEKKTGITTMYMDVGLDKGDMILKEEVEIGAEETAGELHDRLMHLGAQVLRKTIGLIENNEITAIPQNHSESTYAPILTKDLGKIDWSQSAIEIKNLIRGTIPWPTAFTFYEGQVMKIWKSTVIESELQEVPGKIIDVKKDCILVATGQNILSIEEIQFSGKKRMGVRDYLVGNAIEKGNILGE.

Residue 109-112 (SLLP) coordinates (6S)-5,6,7,8-tetrahydrofolate.

Belongs to the Fmt family.

The catalysed reaction is L-methionyl-tRNA(fMet) + (6R)-10-formyltetrahydrofolate = N-formyl-L-methionyl-tRNA(fMet) + (6S)-5,6,7,8-tetrahydrofolate + H(+). In terms of biological role, attaches a formyl group to the free amino group of methionyl-tRNA(fMet). The formyl group appears to play a dual role in the initiator identity of N-formylmethionyl-tRNA by promoting its recognition by IF2 and preventing the misappropriation of this tRNA by the elongation apparatus. This Alkaliphilus oremlandii (strain OhILAs) (Clostridium oremlandii (strain OhILAs)) protein is Methionyl-tRNA formyltransferase.